The primary structure comprises 420 residues: Serine--tRNA ligase (420 aa).

227 to 229 (TSE) serves as a coordination point for L-serine. ATP contacts are provided by residues 258–260 (RRE) and valine 274. Glutamate 281 contacts L-serine. 345–348 (ELTS) is a binding site for ATP. Threonine 380 is a binding site for L-serine.

Belongs to the class-II aminoacyl-tRNA synthetase family. Type-1 seryl-tRNA synthetase subfamily. Homodimer. The tRNA molecule binds across the dimer.

It localises to the cytoplasm. The catalysed reaction is tRNA(Ser) + L-serine + ATP = L-seryl-tRNA(Ser) + AMP + diphosphate + H(+). It catalyses the reaction tRNA(Sec) + L-serine + ATP = L-seryl-tRNA(Sec) + AMP + diphosphate + H(+). The protein operates within aminoacyl-tRNA biosynthesis; selenocysteinyl-tRNA(Sec) biosynthesis; L-seryl-tRNA(Sec) from L-serine and tRNA(Sec): step 1/1. Its function is as follows. Catalyzes the attachment of serine to tRNA(Ser). Is also able to aminoacylate tRNA(Sec) with serine, to form the misacylated tRNA L-seryl-tRNA(Sec), which will be further converted into selenocysteinyl-tRNA(Sec). The protein is Serine--tRNA ligase of Nocardia farcinica (strain IFM 10152).